The sequence spans 729 residues: Fatty acid oxidation complex subunit alpha (729 aa).

Residues 1–189 are enoyl-CoA hydratase/isomerase; that stretch reads MLYKGDTLYL…KIGLVDGVVK (189 aa). Asp296 lines the substrate pocket. Positions 311–729 are 3-hydroxyacyl-CoA dehydrogenase; that stretch reads ETPKQAAVLG…ARPVGDLKTA (419 aa). Residues Met324, Asp343, 400 to 402, Lys407, and Ser429 contribute to the NAD(+) site; that span reads VVE. His450 (for 3-hydroxyacyl-CoA dehydrogenase activity) is an active-site residue. Residue Asn453 participates in NAD(+) binding. Substrate is bound by residues Asn500 and Tyr660. Residues 708 to 729 form a disordered region; it reads RHNEPYYPPVEPARPVGDLKTA.

It in the N-terminal section; belongs to the enoyl-CoA hydratase/isomerase family. The protein in the C-terminal section; belongs to the 3-hydroxyacyl-CoA dehydrogenase family. As to quaternary structure, heterotetramer of two alpha chains (FadB) and two beta chains (FadA).

It catalyses the reaction a (3S)-3-hydroxyacyl-CoA + NAD(+) = a 3-oxoacyl-CoA + NADH + H(+). It carries out the reaction a (3S)-3-hydroxyacyl-CoA = a (2E)-enoyl-CoA + H2O. The catalysed reaction is a 4-saturated-(3S)-3-hydroxyacyl-CoA = a (3E)-enoyl-CoA + H2O. The enzyme catalyses (3S)-3-hydroxybutanoyl-CoA = (3R)-3-hydroxybutanoyl-CoA. It catalyses the reaction a (3Z)-enoyl-CoA = a 4-saturated (2E)-enoyl-CoA. It carries out the reaction a (3E)-enoyl-CoA = a 4-saturated (2E)-enoyl-CoA. It participates in lipid metabolism; fatty acid beta-oxidation. In terms of biological role, involved in the aerobic and anaerobic degradation of long-chain fatty acids via beta-oxidation cycle. Catalyzes the formation of 3-oxoacyl-CoA from enoyl-CoA via L-3-hydroxyacyl-CoA. It can also use D-3-hydroxyacyl-CoA and cis-3-enoyl-CoA as substrate. The chain is Fatty acid oxidation complex subunit alpha from Escherichia coli (strain K12 / MC4100 / BW2952).